Here is a 412-residue protein sequence, read N- to C-terminus: G-protein coupled receptor homolog UL33 (412 aa).

At 1–35 (MDTIIHNTTNRSTDTPHVNITCNITEPLSAIRTTE) the chain is on the virion surface side. Residues asparagine 7, asparagine 19, and asparagine 23 are each glycosylated (N-linked (GlcNAc...) asparagine; by host). The chain crosses the membrane as a helical span at residues 36–56 (AVINTFIIFVGGPLNAIVLIT). Over 57–80 (QLLTNRVLGYSTPTIYMTNLYSTN) the chain is Intravirion. A helical transmembrane segment spans residues 81-101 (FLTLTVLPFIVLSNQWLLPAS). The Virion surface portion of the chain corresponds to 102–106 (VASCK). A disulfide bridge links cysteine 105 with cysteine 188. The helical transmembrane segment at 107-127 (FLSVIYYSSCTVGFATVALIA) threads the bilayer. The Intravirion portion of the chain corresponds to 128 to 147 (ADRYRVLHKRTYARQSYRST). Residues 148-168 (YIILLLTWFAGLIFSMPAAVY) traverse the membrane as a helical segment. The Virion surface portion of the chain corresponds to 169–206 (TTVVIHNGTNGQSSNGHATCVLYFIADEVYTVLLSWKV). Residues 207 to 227 (LLTLVWGAAPVIMMTWFYAFF) form a helical membrane-spanning segment. Residues 228–244 (YSTVQRASQKQRSRTLT) lie on the Intravirion side of the membrane. Residues 245–265 (FVSVLLISFVALQTPYVSIMI) form a helical membrane-spanning segment. Topologically, residues 266–292 (FNSYATAAWPMDCEHLTLRRTIGTLSR) are virion surface. A helical membrane pass occupies residues 293–313 (LVPHLHCLINPILYALLGHDF). The Intravirion portion of the chain corresponds to 314–412 (LQRMRQCFRG…SQSHHNLSGV (99 aa)). Residues 377–412 (NFPSGTWKGGQKTASNDTSTKIPHRLSQSHHNLSGV) are disordered. Residues 388-397 (KTASNDTSTK) are compositionally biased toward polar residues.

Belongs to the G-protein coupled receptor 1 family. Heterodimerizes with US28.

The protein localises to the virion. It localises to the host cell membrane. Its subcellular location is the host cytoplasm. Its function is as follows. G-protein-coupled receptor (vGPCR) that constitutively activates multiple oncogenic signaling pathways including STAT3, AP-1, phospholipase C, NF-kappa-B or cAMP-responsive element (CRE) pathways. Plays an important role in viral reactivation from latency through activation of host CREB1, facilitating its recruitment to the viral major immediate early (MIE) genes. In turn, expression of the MIE-driven genes such as UL123 are de-repressed. Also facilitates virus dissemination via the extracellular and cell-to-cell route. This Human cytomegalovirus (strain Merlin) (HHV-5) protein is G-protein coupled receptor homolog UL33 (UL33).